The following is a 176-amino-acid chain: Adenine phosphoribosyltransferase (176 aa).

The protein belongs to the purine/pyrimidine phosphoribosyltransferase family. As to quaternary structure, homodimer.

It is found in the cytoplasm. The catalysed reaction is AMP + diphosphate = 5-phospho-alpha-D-ribose 1-diphosphate + adenine. The protein operates within purine metabolism; AMP biosynthesis via salvage pathway; AMP from adenine: step 1/1. Catalyzes a salvage reaction resulting in the formation of AMP, that is energically less costly than de novo synthesis. The chain is Adenine phosphoribosyltransferase from Gluconacetobacter diazotrophicus (strain ATCC 49037 / DSM 5601 / CCUG 37298 / CIP 103539 / LMG 7603 / PAl5).